The following is a 161-amino-acid chain: Endoribonuclease YbeY (161 aa).

Residues His-121, His-125, and His-131 each coordinate Zn(2+).

It belongs to the endoribonuclease YbeY family. Zn(2+) serves as cofactor.

It is found in the cytoplasm. Single strand-specific metallo-endoribonuclease involved in late-stage 70S ribosome quality control and in maturation of the 3' terminus of the 16S rRNA. The chain is Endoribonuclease YbeY from Xylella fastidiosa (strain 9a5c).